Consider the following 507-residue polypeptide: Arabinose import ATP-binding protein AraG (507 aa).

2 ABC transporter domains span residues 14–249 (LRFN…MVGR) and 249–505 (RDIQ…LPRT). 46-53 (GENGAGKS) is an ATP binding site.

This sequence belongs to the ABC transporter superfamily. Arabinose importer (TC 3.A.1.2.2) family. In terms of assembly, the complex is composed of two ATP-binding proteins (AraG), two transmembrane proteins (AraH) and a solute-binding protein (AraF).

It is found in the cell inner membrane. It carries out the reaction L-arabinose(out) + ATP + H2O = L-arabinose(in) + ADP + phosphate + H(+). Its function is as follows. Part of the ABC transporter complex AraFGH involved in arabinose import. Responsible for energy coupling to the transport system. This Pseudomonas syringae pv. tomato (strain ATCC BAA-871 / DC3000) protein is Arabinose import ATP-binding protein AraG.